Reading from the N-terminus, the 284-residue chain is TM2 domain-containing protein almondex (284 aa).

Positions 1–32 (MRLQRQCIVVNMRSAIVLIMIFVLTGIRNSET) are cleaved as a signal peptide. Residues 33-63 (ASGGNQMDLSDSKGDHKDNSNASNGNGNAND) are disordered. The Extracellular segment spans residues 33-225 (ASGGNQMDLS…NWTQGYRWST (193 aa)). A compositionally biased stretch (basic and acidic residues) spans 42–51 (SDSKGDHKDN). A compositionally biased stretch (low complexity) spans 52-63 (SNASNGNGNAND). 6 N-linked (GlcNAc...) asparagine glycosylation sites follow: Asn-53, Asn-89, Asn-141, Asn-194, Asn-206, and Asn-216. Positions 220–267 (GYRWSTALLISLTLGGFGADRFYLGHWQEGIGKLFSFGGLGVWTIIDV) constitute a TM2 domain. A helical transmembrane segment spans residues 226–246 (ALLISLTLGGFGADRFYLGHW). The Cytoplasmic segment spans residues 247–249 (QEG). The chain crosses the membrane as a helical span at residues 250 to 270 (IGKLFSFGGLGVWTIIDVLLI). Topologically, residues 271–284 (SMHYLGPADGSLYI) are extracellular.

It belongs to the TM2 family. As to expression, expressed in female ovary, mainly in nurse cells (at protein level). Expressed in the brain at low levels (at protein level).

It is found in the membrane. The protein localises to the vesicle. In terms of biological role, positive regulator of Notch signaling during lateral inhibition and boundary formation. Interacts with Notch signaling at the membrane, at the level of gamma-secretase-mediated S3 cleavage. May regulate Notch signaling by regulating the subcellular localization of N/Notch in a context dependent manner. Maternal neurogenic factor involved in Notch signaling-dependent mesectodermal and neuroectodermal specification during early embryogenesis. Functions cooperatively with bisc/TM2D1 and amrt/TM2D2. Required for maintenance of neuronal function. Involved in imaginal specification of eyes and wings. This chain is TM2 domain-containing protein almondex, found in Drosophila melanogaster (Fruit fly).